The sequence spans 366 residues: Histidinol-phosphate aminotransferase (366 aa).

An N6-(pyridoxal phosphate)lysine modification is found at Lys231.

This sequence belongs to the class-II pyridoxal-phosphate-dependent aminotransferase family. Histidinol-phosphate aminotransferase subfamily. Pyridoxal 5'-phosphate serves as cofactor.

The catalysed reaction is L-histidinol phosphate + 2-oxoglutarate = 3-(imidazol-4-yl)-2-oxopropyl phosphate + L-glutamate. Its pathway is amino-acid biosynthesis; L-histidine biosynthesis; L-histidine from 5-phospho-alpha-D-ribose 1-diphosphate: step 7/9. This chain is Histidinol-phosphate aminotransferase, found in Halobacterium salinarum (strain ATCC 29341 / DSM 671 / R1).